The sequence spans 175 residues: MELGQEATDDKRYVLVGRISGLYGVQGWLRVYSYTQPRNNILDYEPWYLQQNGAWQARRLRKGRVQGKGIVVALEGIDERDVAALWVGCEIAVHRDQLPPPQEGEYYWSDLIGLQVITLQGEVLGQVDRLLETGANDVLVVRGERERLLPFLMGMIVKQVDLQQGLLTVDWDPDF.

Residues glutamate 103–phenylalanine 175 enclose the PRC barrel domain.

It belongs to the RimM family. As to quaternary structure, binds ribosomal protein uS19.

It is found in the cytoplasm. Functionally, an accessory protein needed during the final step in the assembly of 30S ribosomal subunit, possibly for assembly of the head region. Essential for efficient processing of 16S rRNA. May be needed both before and after RbfA during the maturation of 16S rRNA. It has affinity for free ribosomal 30S subunits but not for 70S ribosomes. The polypeptide is Ribosome maturation factor RimM (Nitrosococcus oceani (strain ATCC 19707 / BCRC 17464 / JCM 30415 / NCIMB 11848 / C-107)).